Reading from the N-terminus, the 474-residue chain is Chromosomal replication initiator protein DnaA (474 aa).

Residues 1 to 73 form a domain I, interacts with DnaA modulators region; the sequence is MTNIEQERWS…LSCWQAEMPE (73 aa). Residues 73-130 are domain II; the sequence is EVHRIDLTVRTAMRCAAPAKEQAAPIEPRREDNRAAAHDLRVSATAPVSANHEALGGS. The segment at 131–353 is domain III, AAA+ region; it reads PLDPRLTFSS…GAINRLLAHS (223 aa). ATP contacts are provided by Gly178, Gly180, Lys181, and Thr182. The domain IV, binds dsDNA stretch occupies residues 354–474; it reads KLNAQPVTLE…VESLKRQLQE (121 aa).

The protein belongs to the DnaA family. Oligomerizes as a right-handed, spiral filament on DNA at oriC.

The protein resides in the cytoplasm. Its function is as follows. Plays an essential role in the initiation and regulation of chromosomal replication. ATP-DnaA binds to the origin of replication (oriC) to initiate formation of the DNA replication initiation complex once per cell cycle. Binds the DnaA box (a 9 base pair repeat at the origin) and separates the double-stranded (ds)DNA. Forms a right-handed helical filament on oriC DNA; dsDNA binds to the exterior of the filament while single-stranded (ss)DNA is stabiized in the filament's interior. The ATP-DnaA-oriC complex binds and stabilizes one strand of the AT-rich DNA unwinding element (DUE), permitting loading of DNA polymerase. After initiation quickly degrades to an ADP-DnaA complex that is not apt for DNA replication. Binds acidic phospholipids. The chain is Chromosomal replication initiator protein DnaA from Rhodopseudomonas palustris (strain BisA53).